A 206-amino-acid polypeptide reads, in one-letter code: Guanylate kinase (206 aa).

In terms of domain architecture, Guanylate kinase-like spans 5–183 (GNLFVVAAPS…AVFDLKTIVH (179 aa)). Residue 12–19 (APSGAGKS) coordinates ATP.

It belongs to the guanylate kinase family.

The protein resides in the cytoplasm. The enzyme catalyses GMP + ATP = GDP + ADP. Functionally, essential for recycling GMP and indirectly, cGMP. The chain is Guanylate kinase from Polaromonas sp. (strain JS666 / ATCC BAA-500).